Here is a 226-residue protein sequence, read N- to C-terminus: MEKRAVVLYSGGLDSTTCLAMAKADGFAPYAMSFSYGQRHGFELEVAKANARPLGAVEHLVVDFDLRRMGGSALTDDISVPKEGVGSDIPVTYVPARNTIFLSFALGWAEVLGAFDIYIGVNSLDYSGYPDCRPEFVSAFEALANLATKSGVEGQGHFSIRTPLINMTKAEIIKAGVALGVDYSWTHSCYDPESDGTSCGRCDSCRLRLKGFAEAGLVDPLTYSGR.

9-19 (YSGGLDSTTCL) lines the ATP pocket. 4 residues coordinate Zn(2+): C189, C199, C202, and C205.

Belongs to the QueC family. Zn(2+) serves as cofactor.

It catalyses the reaction 7-carboxy-7-deazaguanine + NH4(+) + ATP = 7-cyano-7-deazaguanine + ADP + phosphate + H2O + H(+). The protein operates within purine metabolism; 7-cyano-7-deazaguanine biosynthesis. Functionally, catalyzes the ATP-dependent conversion of 7-carboxy-7-deazaguanine (CDG) to 7-cyano-7-deazaguanine (preQ(0)). This chain is 7-cyano-7-deazaguanine synthase, found in Pelobacter propionicus (strain DSM 2379 / NBRC 103807 / OttBd1).